The following is a 66-amino-acid chain: MAKSKGVRIIVTLECTECRTATAAEKRSPGVSRYTTTKNRRNNLERLELMKFCPQLNRMTLHREIK.

Belongs to the bacterial ribosomal protein bL33 family.

The sequence is that of Large ribosomal subunit protein bL33B from Synechococcus sp. (strain CC9605).